A 140-amino-acid polypeptide reads, in one-letter code: ATP synthase epsilon chain (140 aa).

The protein belongs to the ATPase epsilon chain family. As to quaternary structure, F-type ATPases have 2 components, CF(1) - the catalytic core - and CF(0) - the membrane proton channel. CF(1) has five subunits: alpha(3), beta(3), gamma(1), delta(1), epsilon(1). CF(0) has three main subunits: a, b and c.

The protein resides in the cell inner membrane. Produces ATP from ADP in the presence of a proton gradient across the membrane. This chain is ATP synthase epsilon chain, found in Nitrosococcus oceani (strain ATCC 19707 / BCRC 17464 / JCM 30415 / NCIMB 11848 / C-107).